The chain runs to 84 residues: U8-theraphotoxin-Hhn1c 2 (84 aa).

Positions 1 to 21 (MKVVLLVCLVWMMAMMELVSC) are cleaved as a signal peptide. 5 cysteine pairs are disulfide-bonded: Cys-23–Cys-35, Cys-29–Cys-44, Cys-34–Cys-67, Cys-54–Cys-75, and Cys-69–Cys-81.

It belongs to the AVIT (prokineticin) family. Expressed by the venom gland.

It is found in the secreted. The sequence is that of U8-theraphotoxin-Hhn1c 2 from Cyriopagopus hainanus (Chinese bird spider).